A 271-amino-acid polypeptide reads, in one-letter code: Ribosomal RNA small subunit methyltransferase A (271 aa).

Residues histidine 11, leucine 13, glycine 38, glutamate 58, aspartate 86, and asparagine 101 each contribute to the S-adenosyl-L-methionine site.

It belongs to the class I-like SAM-binding methyltransferase superfamily. rRNA adenine N(6)-methyltransferase family. RsmA subfamily.

Its subcellular location is the cytoplasm. It carries out the reaction adenosine(1518)/adenosine(1519) in 16S rRNA + 4 S-adenosyl-L-methionine = N(6)-dimethyladenosine(1518)/N(6)-dimethyladenosine(1519) in 16S rRNA + 4 S-adenosyl-L-homocysteine + 4 H(+). Functionally, specifically dimethylates two adjacent adenosines (A1518 and A1519) in the loop of a conserved hairpin near the 3'-end of 16S rRNA in the 30S particle. May play a critical role in biogenesis of 30S subunits. This Helicobacter pylori (strain P12) protein is Ribosomal RNA small subunit methyltransferase A.